Consider the following 213-residue polypeptide: Ras-related protein Rab-4A (213 aa).

Residues glycine 18, threonine 19, glycine 20, lysine 21, serine 22, cysteine 23, serine 37, histidine 39, and threonine 40 each contribute to the GTP site. Serine 22 contributes to the Mg(2+) binding site. The short motif at 39–44 is the Switch 1 element; the sequence is HTIGVE. The Mg(2+) site is built by threonine 40 and aspartate 63. Residues 65 to 74 carry the Switch 2 motif; sequence AGQERFRSVT. GTP-binding residues include glycine 66, asparagine 121, lysine 122, aspartate 124, alanine 152, and leucine 153. S-geranylgeranyl cysteine attachment occurs at residues cysteine 211 and cysteine 213. Residue cysteine 213 is modified to Cysteine methyl ester.

The protein belongs to the small GTPase superfamily. Rab family. Mg(2+) is required as a cofactor.

Its subcellular location is the membrane. It is found in the cytoplasm. The protein localises to the early endosome membrane. It localises to the recycling endosome membrane. The catalysed reaction is GTP + H2O = GDP + phosphate + H(+). Its activity is regulated as follows. Regulated by guanine nucleotide exchange factors (GEFs) which promote the exchange of bound GDP for free GTP. Regulated by GTPase activating proteins (GAPs) which increase the GTP hydrolysis activity. Inhibited by GDP dissociation inhibitors (GDIs). The small GTPases Rab are key regulators of intracellular membrane trafficking, from the formation of transport vesicles to their fusion with membranes. Rabs cycle between an inactive GDP-bound form and an active GTP-bound form that is able to recruit to membranes different sets of downstream effectors directly responsible for vesicle formation, movement, tethering and fusion. RAB4A is involved in protein transport. Also plays a role in vesicular traffic. Mediates VEGFR2 endosomal trafficking to enhance VEGFR2 signaling. Acts as a regulator of platelet alpha-granule release during activation and aggregation of platelets. This is Ras-related protein Rab-4A (rab4a) from Danio rerio (Zebrafish).